Here is a 164-residue protein sequence, read N- to C-terminus: B-phycoerythrin alpha chain (164 aa).

2 residues coordinate (2R,3E)-phycoerythrobilin: Cys-82 and Cys-139.

Belongs to the phycobiliprotein family. Heteromer of 6 alpha, 6 beta and one gamma chain. Post-translationally, contains two covalently linked bilin chromophores.

It is found in the plastid. The protein resides in the chloroplast thylakoid membrane. Functionally, light-harvesting photosynthetic bile pigment-protein from the phycobiliprotein complex. This is B-phycoerythrin alpha chain (cpeA) from Porphyridium purpureum (Red alga).